The sequence spans 665 residues: Anaphase-promoting complex subunit 3 (665 aa).

One copy of the TPR 1 repeat lies at 115-148 (SCMLDVLGTMYKKAGFLKKATDCFVEAVSINPYN). The DNA-binding element occupies 191 to 257 (VPEPSFLKKS…HQSLKLQSQS (67 aa)). 8 TPR repeats span residues 329 to 362 (LLKL…QQNT), 363 to 396 (PFVL…SPSR), 431 to 464 (PESW…DPTF), 466 to 498 (YAYT…NVRH), 499 to 532 (YNAW…NPNN), 534 to 566 (VLIT…DEKS), 568 to 600 (LARF…APDE), and 601 to 634 (ANVH…DGKA).

This sequence belongs to the APC3/CDC27 family. In terms of assembly, the APC/C is composed of at least 13 subunits: apc1, apc2, nuc2, apc4, apc5, cut9, apc8, apc10, apc11, hcn1, apc13, apc14 and apc15. Interacts with apc10 and cut9.

Its subcellular location is the nucleus. Functionally, component of the anaphase-promoting complex/cyclosome (APC/C), a cell cycle-regulated E3 ubiquitin-protein ligase complex that controls progression through mitosis and the G1 phase of the cell cycle. The APC/C is thought to confer substrate specificity and, in the presence of ubiquitin-conjugating E2 enzymes, it catalyzes the formation of protein-ubiquitin conjugates that are subsequently degraded by the 26S proteasome. Interacts with spindle apparatus, chromosomes, or nuclear envelope, and interconnect nuclear and cytoskeletal functions in mitosis, so the elongation of the spindle in anaphase is blocked. The polypeptide is Anaphase-promoting complex subunit 3 (nuc2) (Schizosaccharomyces pombe (strain 972 / ATCC 24843) (Fission yeast)).